A 391-amino-acid polypeptide reads, in one-letter code: DNA primase small subunit PriS (391 aa).

Active-site residues include aspartate 98, aspartate 100, and aspartate 294.

Belongs to the eukaryotic-type primase small subunit family. Heterodimer of a small subunit (PriS) and a large subunit (PriL). Mg(2+) is required as a cofactor. Mn(2+) serves as cofactor.

In terms of biological role, catalytic subunit of DNA primase, an RNA polymerase that catalyzes the synthesis of short RNA molecules used as primers for DNA polymerase during DNA replication. The small subunit contains the primase catalytic core and has DNA synthesis activity on its own. Binding to the large subunit stabilizes and modulates the activity, increasing the rate of DNA synthesis while decreasing the length of the DNA fragments, and conferring RNA synthesis capability. The DNA polymerase activity may enable DNA primase to also catalyze primer extension after primer synthesis. May also play a role in DNA repair. The protein is DNA primase small subunit PriS of Halobacterium salinarum (strain ATCC 29341 / DSM 671 / R1).